The primary structure comprises 686 residues: MDASIGDPRLTSVEAAFEKNPLPGFSWLVTPRAMAVAVLLGIVFCFVGMRIQMMTGFVPALNMPVTVLSFFLLKVLARQLQKWRLTVVPFTRQENMFLITCVITCLNLAITGGFATALTGMGTIVAKTLADDLDPRDIIDYIPTGKLIIYFFLIGMAGVLSNIPLNQIMIIDYQLLFPTGSVIGHLINSFHTPEGAYIAKMQVMTIFKVFFGSFSWSIFQWFYSSGSGCGFSSFPTFGLELYKRRFYIDFSATYIGVGMMCPHIVNFGLLFGAIISWGFLYPYLETKHGEWYQTDSPSNLDGLNGYKVFISVTLIVTDGLINFLILVTSAAINFYHIRQQQQQTSGLASYISKNPSMNYDERKRIEMFLSSKIPMFVPVAAYVAWTAISMVAMPAMFDQIKYYHVGVLYLAIPVVGFCNTYATGLTDWSVSNTYAKFSPFIFAAWIARPGAIVASLLVSGITMASLHVSSQAMQDLKSAHMTLTSPRAMIAGQVFGVALSSVVSPCIFRAFEKAAKPGAPLGSKDSVYPCPYAGLYRAICIIGMGGVKGLPKYCVELCVIAVLVTIAIDALVLVSQLKGWRLHLYIPSMTVIALPFFAGSYFTLDMCLGGLLLLLWKKIDTMSAEILSAAVAAGLICGEGLFTLPSALLNMFKVLPPMCMKFLPSGQEVEVVDSFLNSSGGTVPKT.

Helical transmembrane passes span 27 to 47 (WLVT…FCFV), 53 to 73 (MMTG…FFLL), 96 to 116 (MFLI…GFAT), 151 to 171 (FFLI…IMII), 203 to 223 (VMTI…QWFY), 264 to 284 (IVNF…YPYL), 308 to 328 (VFIS…ILVT), 373 to 393 (IPMF…MVAM), 405 to 425 (VGVL…ATGL), 441 to 461 (IFAA…VSGI), 488 to 508 (AMIA…PCIF), 554 to 574 (CVEL…LVLV), 596 to 616 (FFAG…LLLW), and 629 to 649 (AAVA…SALL).

The protein belongs to the YSL (TC 2.A.67.2) family.

It is found in the membrane. In terms of biological role, may be involved in the transport of nicotianamine-chelated metals. The polypeptide is Probable metal-nicotianamine transporter YSL4 (YSL4) (Oryza sativa subsp. japonica (Rice)).